Here is a 101-residue protein sequence, read N- to C-terminus: uncharacterized protein (101 aa).

An N-terminal signal peptide occupies residues 1–18; sequence MSINALLYVLSLALLIWT. The helical transmembrane segment at 62 to 82 threads the bilayer; that stretch reads FQFDSIPSSSLSLSPFPFLFF.

The protein resides in the membrane. This is an uncharacterized protein from Saccharomyces cerevisiae (strain ATCC 204508 / S288c) (Baker's yeast).